The chain runs to 261 residues: Probable membrane transporter protein PD_1894 (261 aa).

A run of 8 helical transmembrane segments spans residues 6–26 (LIVTIGSGGLVGFALGLLGGG), 45–64 (HIAIGTSAVAVSVNAYANLI), 78–98 (VIFALVGTLGAFLGSSIGMLI), 99–119 (DGQRLLLLFGLLMAMVGLLML), 150–170 (AASGFFGIGGGFLIVPALIFA), 175–195 (TINAIGSSLLAVGSFGLITTL), 205–225 (WTIAMEFIVGGITGGGLGTLL), and 239–259 (VFGLIVIAVAIYVIWRSWASL).

This sequence belongs to the 4-toluene sulfonate uptake permease (TSUP) (TC 2.A.102) family.

It localises to the cell membrane. The chain is Probable membrane transporter protein PD_1894 from Xylella fastidiosa (strain Temecula1 / ATCC 700964).